A 462-amino-acid polypeptide reads, in one-letter code: Na(+)/H(+) antiporter NhaA (462 aa).

The next 11 membrane-spanning stretches (helical) occupy residues 24-44 (ISGLIMLGFALAGLVLANLPL), 66-86 (LPIGHWAQDGLLTIFFLTVGL), 102-122 (AAAVPMLCAVGGMITPPILFL), 156-176 (GWAVPTATDIAFSLAVLALFA), 196-216 (LLAIILIAVFFSSVNAWYWFI), 235-255 (PWIAVGVVGILAWIMMFEAGI), 256-275 (HPTLAGVLVGLLTPARVMHG), 290-310 (PFSALLALPIFALFATGVHFE), 312-332 (MSPLLLLSPLVIALIVALVVG), 361-381 (MIPAAVACGIGFTVSFLIASL), and 392-412 (ARFGVLVASLIAAAISGVLLS).

Belongs to the NhaA Na(+)/H(+) (TC 2.A.33) antiporter family.

Its subcellular location is the cell membrane. It carries out the reaction Na(+)(in) + 2 H(+)(out) = Na(+)(out) + 2 H(+)(in). Its function is as follows. Na(+)/H(+) antiporter that extrudes sodium in exchange for external protons. The protein is Na(+)/H(+) antiporter NhaA of Bifidobacterium breve (strain NCIMB 8807 / UCC2003).